A 479-amino-acid polypeptide reads, in one-letter code: MNSASVSGESSLSDMIQTVHFSSGNPRIGETRGVMHLISDNAVSSSSSSSSSNLPIGRNPLVCVLGVPNHMTYADFCQFCGSFIQHILDMRTVRNDDIENRYSILIRFDSQESTDTFFQHFRGKQFNSLDEDVCRLLFALDVQFTGYSGSIDHTQPSAAGPIEQPTCPVCLERLDQDTGGILTTMCNHSFHCSCISNWPDSSCPVCRYCQQQPENSVCCVCQTTENLWMCVICGVVGCGRYKEGHARRHWEETEHCYSLELETQRVWDYAGDNYVHRLIQSKTDGKLVELNSHGSLSKDGCGSCEYSDSGMTDALLNSKVDMIISEYNELLQAQLENQKQYFEKLLQNVKEETEQKISEAASKAISQRLQKLQTRFDRCVKEKQFLEDLNENLVKNKDVWSTKITEMKEREKKAVRAKDEKIQGLEEQLGNLMAQMDGESEVSETKEVQDATVSTTNTSSSGAGNVIHANKKKSNRRKG.

The segment at 167-207 (CPVCLERLDQDTGGILTTMCNHSFHCSCISNWPDSSCPVCR) adopts an RING-type; atypical zinc-finger fold. The UBP-type; degenerate zinc-finger motif lies at 201–294 (SSCPVCRYCQ…GKLVELNSHG (94 aa)). 8 residues coordinate Zn(2+): cysteine 218, cysteine 221, cysteine 230, cysteine 233, cysteine 238, histidine 245, histidine 249, and histidine 255. A coiled-coil region spans residues 328 to 442 (NELLQAQLEN…MAQMDGESEV (115 aa)). The tract at residues 434 to 479 (AQMDGESEVSETKEVQDATVSTTNTSSSGAGNVIHANKKKSNRRKG) is disordered. The span at 451-466 (ATVSTTNTSSSGAGNV) shows a compositional bias: low complexity. Basic residues predominate over residues 469 to 479 (ANKKKSNRRKG).

In terms of assembly, component of the heteromeric E3 ligase complex made of BRIZ1 and BRIZ2. Forms heterooligomers with BRIZ1 via coiled-coil domains.

The enzyme catalyses S-ubiquitinyl-[E2 ubiquitin-conjugating enzyme]-L-cysteine + [acceptor protein]-L-lysine = [E2 ubiquitin-conjugating enzyme]-L-cysteine + N(6)-ubiquitinyl-[acceptor protein]-L-lysine.. It participates in protein modification; protein ubiquitination. Its function is as follows. RING-type ubiquitin E3 ligase that binds ubiquitin and is required for seed germination and post-germination growth. This Arabidopsis thaliana (Mouse-ear cress) protein is BRAP2 RING ZnF UBP domain-containing protein 2.